A 49-amino-acid polypeptide reads, in one-letter code: Large ribosomal subunit protein bL33 (49 aa).

It belongs to the bacterial ribosomal protein bL33 family.

The chain is Large ribosomal subunit protein bL33 from Clostridioides difficile (strain 630) (Peptoclostridium difficile).